The sequence spans 252 residues: Ribosomal RNA small subunit methyltransferase J (252 aa).

S-adenosyl-L-methionine-binding positions include 101 to 102 (RD), 117 to 118 (ER), 153 to 154 (SS), and Asp-171.

Belongs to the methyltransferase superfamily. RsmJ family.

It localises to the cytoplasm. The enzyme catalyses guanosine(1516) in 16S rRNA + S-adenosyl-L-methionine = N(2)-methylguanosine(1516) in 16S rRNA + S-adenosyl-L-homocysteine + H(+). In terms of biological role, specifically methylates the guanosine in position 1516 of 16S rRNA. The polypeptide is Ribosomal RNA small subunit methyltransferase J (Salmonella typhimurium (strain LT2 / SGSC1412 / ATCC 700720)).